Reading from the N-terminus, the 238-residue chain is MRAIYIISVIIVSLSIFSWGGNARSDYPWAMFALRLQWPAGFCEVNNACDTKSLLNTFTIHGLYPYNAKGTPALYCDGTAFDVNSVSDFLAEMHLAWPSHETNTEDIQFWEHEWKKHGRCSEALLKQTDYFRTALAFRKAFDIVGLLNQEGIYPNNDLYRPKMIKEAIKKHLNAVPEIDFTKNENSEYVLTDINVCVNQQATRFVDCPTDDATDDYRLKFVRLPSKMKFADPRTNSII.

A signal peptide spans 1 to 23; it reads MRAIYIISVIIVSLSIFSWGGNA. An RNA-binding site is contributed by Gln37. A disulfide bond links Cys43 and Cys49. Residues His61, Phe109, 112–113, and 116–117 each bind RNA; these read HE and KH. His61 acts as the Proton donor in catalysis. 2 cysteine pairs are disulfide-bonded: Cys76-Cys120 and Cys196-Cys207. Glu113 is an active-site residue. The active-site Proton acceptor is His117.

The protein belongs to the RNase T2 family. Homodimer. In terms of tissue distribution, root.

In terms of biological role, may act as a storage protein providing a nitrogen source. Seems to have no RNase activity although it has conserved the active site residues. The polypeptide is Ribonuclease-like storage protein (Panax ginseng (Korean ginseng)).